The following is a 786-amino-acid chain: Exo-beta-D-glucosaminidase (786 aa).

Residues Y53, 102–103, 178–179, E306, E347, and Y379 contribute to the substrate site; these read GE and DE. E179 acts as the Proton donor in catalysis. E347 functions as the Nucleophile in the catalytic mechanism.

This sequence belongs to the glycosyl hydrolase 35 family. Homodimer.

The protein resides in the cytoplasm. It catalyses the reaction beta-D-glucosaminyl-(1-&gt;4)-N-acetyl-D-glucosamine + H2O = D-glucosamine + N-acetyl-D-glucosamine. Its pathway is glycan degradation; chitin degradation. In terms of biological role, exo-type enzyme that specifically cleaves the non-reducing terminal glycosidic bond of chitooligosaccharides. Catalyzes the hydrolysis of GlcN-GlcNAc to glucosamine (GlcN) and N-acetylglucosamine (GlcNAc). Involved in chitin degradation. Can also hydrolyze reduced chitobiose (GlcN2OH) and chitooligosaccharides of various chain lengths. The polypeptide is Exo-beta-D-glucosaminidase (Thermococcus kodakarensis (strain ATCC BAA-918 / JCM 12380 / KOD1) (Pyrococcus kodakaraensis (strain KOD1))).